Consider the following 196-residue polypeptide: Large ribosomal subunit protein uL5 (196 aa).

Belongs to the universal ribosomal protein uL5 family. In terms of assembly, part of the 50S ribosomal subunit; part of the 5S rRNA/L5/L18/L25 subcomplex. Contacts the 5S rRNA and the P site tRNA. Forms a bridge to the 30S subunit in the 70S ribosome.

In terms of biological role, this is one of the proteins that bind and probably mediate the attachment of the 5S RNA into the large ribosomal subunit, where it forms part of the central protuberance. In the 70S ribosome it contacts protein S13 of the 30S subunit (bridge B1b), connecting the 2 subunits; this bridge is implicated in subunit movement. Contacts the P site tRNA; the 5S rRNA and some of its associated proteins might help stabilize positioning of ribosome-bound tRNAs. This Chlorobium phaeobacteroides (strain BS1) protein is Large ribosomal subunit protein uL5.